A 262-amino-acid chain; its full sequence is Type III pantothenate kinase (262 aa).

9 to 16 (DIGNTNIV) contacts ATP. Residues Tyr103 and 110–113 (GVDR) contribute to the substrate site. The active-site Proton acceptor is Asp112. Asp132 lines the K(+) pocket. Position 135 (Thr135) interacts with ATP. Residue Thr187 coordinates substrate.

It belongs to the type III pantothenate kinase family. In terms of assembly, homodimer. NH4(+) serves as cofactor. The cofactor is K(+).

Its subcellular location is the cytoplasm. It catalyses the reaction (R)-pantothenate + ATP = (R)-4'-phosphopantothenate + ADP + H(+). Its pathway is cofactor biosynthesis; coenzyme A biosynthesis; CoA from (R)-pantothenate: step 1/5. Functionally, catalyzes the phosphorylation of pantothenate (Pan), the first step in CoA biosynthesis. The chain is Type III pantothenate kinase from Finegoldia magna (strain ATCC 29328 / DSM 20472 / WAL 2508) (Peptostreptococcus magnus).